We begin with the raw amino-acid sequence, 290 residues long: MSVKPTKQKPGEPPTTGHSWDGIEEFDNPMPRWWLWTFYVTIVWAIGYSILYPAWPLINGATNGLIGHSTRADVQRDIEAFAEANATIRQQLVNTDLTAIAADPNLLQYATNAGAAVFRTNCVQCHGSGAAGNVGYPNLLDDDWLWGGDIESIHTTVTHGIRNTTDDEARYSEMPRFGADGLLDSTQISQVVEYVLQISGQDHDAALSAEGATIFADNCAACHGEDGTGSRDVGAPNLTDAIWLYGGDRATVTETVTYARFGVMPNWNARLTEADIRSVAVYVHGLGGGE.

The interval 1–22 (MSVKPTKQKPGEPPTTGHSWDG) is disordered. Topologically, residues 1 to 37 (MSVKPTKQKPGEPPTTGHSWDGIEEFDNPMPRWWLWT) are cytoplasmic. Residues 38-58 (FYVTIVWAIGYSILYPAWPLI) form a helical membrane-spanning segment. At 59–290 (NGATNGLIGH…VYVHGLGGGE (232 aa)) the chain is on the periplasmic side. Cytochrome c domains follow at residues 109–199 (YATN…LQIS) and 206–287 (ALSA…HGLG). Positions 122, 125, 126, 174, 219, 222, 223, and 264 each coordinate heme c.

Belongs to the CcoP / FixP family. As to quaternary structure, component of the cbb3-type cytochrome c oxidase at least composed of CcoN, CcoO, CcoQ and CcoP. The cofactor is heme c.

It is found in the cell inner membrane. It functions in the pathway energy metabolism; oxidative phosphorylation. Functionally, C-type cytochrome. Part of the cbb3-type cytochrome c oxidase complex. CcoP subunit is required for transferring electrons from donor cytochrome c via its heme groups to CcoO subunit. From there, electrons are shuttled to the catalytic binuclear center of CcoN subunit where oxygen reduction takes place. The complex also functions as a proton pump. This is Cbb3-type cytochrome c oxidase subunit CcoP from Cereibacter sphaeroides (strain ATCC 17023 / DSM 158 / JCM 6121 / CCUG 31486 / LMG 2827 / NBRC 12203 / NCIMB 8253 / ATH 2.4.1.) (Rhodobacter sphaeroides).